Here is a 607-residue protein sequence, read N- to C-terminus: ATP-dependent zinc metalloprotease FtsH 2 (607 aa).

Residues 1-2 (MR) are Cytoplasmic-facing. The chain crosses the membrane as a helical span at residues 3–23 (SLWIVLVLVLGSALLLQVMAA). The Periplasmic portion of the chain corresponds to 24–99 (SDDRIPYARF…PYTRVADELG (76 aa)). Residues 100 to 120 (LPPYLWLLLPLAGLAAMGHLA) traverse the membrane as a helical segment. At 121–607 (SRRATTAGTI…LREMVASGEA (487 aa)) the chain is on the cytoplasmic side. Residue 195–202 (GPPGTGKT) participates in ATP binding. His418 lines the Zn(2+) pocket. Glu419 is a catalytic residue. Residues His422 and Asp495 each coordinate Zn(2+).

In the central section; belongs to the AAA ATPase family. This sequence in the C-terminal section; belongs to the peptidase M41 family. Homohexamer. Requires Zn(2+) as cofactor.

It localises to the cell inner membrane. In terms of biological role, acts as a processive, ATP-dependent zinc metallopeptidase for both cytoplasmic and membrane proteins. Plays a role in the quality control of integral membrane proteins. The polypeptide is ATP-dependent zinc metalloprotease FtsH 2 (Sorangium cellulosum (strain So ce56) (Polyangium cellulosum (strain So ce56))).